We begin with the raw amino-acid sequence, 196 residues long: Peptidyl-tRNA hydrolase (196 aa).

Tyrosine 18 contacts tRNA. Histidine 23 acts as the Proton acceptor in catalysis. Positions 69, 71, and 117 each coordinate tRNA.

Belongs to the PTH family. In terms of assembly, monomer.

It is found in the cytoplasm. The catalysed reaction is an N-acyl-L-alpha-aminoacyl-tRNA + H2O = an N-acyl-L-amino acid + a tRNA + H(+). Hydrolyzes ribosome-free peptidyl-tRNAs (with 1 or more amino acids incorporated), which drop off the ribosome during protein synthesis, or as a result of ribosome stalling. Functionally, catalyzes the release of premature peptidyl moieties from peptidyl-tRNA molecules trapped in stalled 50S ribosomal subunits, and thus maintains levels of free tRNAs and 50S ribosomes. This chain is Peptidyl-tRNA hydrolase, found in Vibrio campbellii (strain ATCC BAA-1116).